The sequence spans 515 residues: Vacuolar segregation protein PEP7 (515 aa).

Residues 6–29 form a C2H2-type zinc finger; it reads VSCPICLRKFDNLQALNAHLDVEH. The interval 36 to 58 is disordered; the sequence is DSLGSNDSRLVNGKQKKARSVDS. The FYVE-type 1; atypical zinc-finger motif lies at 72-137; sequence KKGKSCCHTC…CCHDCFVTKP (66 aa). Zn(2+) contacts are provided by Cys-78, Cys-81, Cys-94, Cys-97, Cys-102, His-105, Cys-129, Cys-132, Cys-221, Cys-224, Cys-237, Cys-240, Cys-245, Cys-252, Cys-289, and Cys-292. The FYVE-type 2 zinc finger occupies 215 to 297; it reads DRSVLFCNIC…LCSHCIDMLF (83 aa).

As to quaternary structure, interacts with VPS21, VPS45, PEP3 and PEP5.

It is found in the vacuole membrane. Required for vacuole segregation and vacuole protein sorting. Possibly part of a complex which tethers the vacuole membrane to microtubules, either directly or via kinesin or dynein-like motor proteins. Probably functions in several interorganelle traffic pathways. The polypeptide is Vacuolar segregation protein PEP7 (PEP7) (Saccharomyces cerevisiae (strain ATCC 204508 / S288c) (Baker's yeast)).